The primary structure comprises 331 residues: ADP-L-glycero-D-manno-heptose-6-epimerase (331 aa).

NADP(+) is bound by residues 11–12, 32–33, Lys-39, Lys-54, 75–79, and Asn-92; these read FI, DN, and EGACS. Tyr-139 serves as the catalytic Proton acceptor. NADP(+) is bound at residue Lys-143. Position 168 (Asn-168) interacts with substrate. 2 residues coordinate NADP(+): Val-169 and Lys-177. Lys-177 acts as the Proton acceptor in catalysis. Residues Arg-179, His-186, 200–203, Arg-213, and Tyr-292 each bind substrate; that span reads FGEY.

This sequence belongs to the NAD(P)-dependent epimerase/dehydratase family. HldD subfamily. As to quaternary structure, homopentamer. Requires NADP(+) as cofactor.

The catalysed reaction is ADP-D-glycero-beta-D-manno-heptose = ADP-L-glycero-beta-D-manno-heptose. The protein operates within nucleotide-sugar biosynthesis; ADP-L-glycero-beta-D-manno-heptose biosynthesis; ADP-L-glycero-beta-D-manno-heptose from D-glycero-beta-D-manno-heptose 7-phosphate: step 4/4. Its function is as follows. Catalyzes the interconversion between ADP-D-glycero-beta-D-manno-heptose and ADP-L-glycero-beta-D-manno-heptose via an epimerization at carbon 6 of the heptose. The polypeptide is ADP-L-glycero-D-manno-heptose-6-epimerase (Ralstonia nicotianae (strain ATCC BAA-1114 / GMI1000) (Ralstonia solanacearum)).